Here is a 213-residue protein sequence, read N- to C-terminus: Ras-like protein rasU (213 aa).

21-28 (GDGGVGKT) contributes to the GTP binding site. An Effector region motif is present at residues 43 to 51 (YDPTIEDLY). GTP is bound by residues 68–72 (DTAGQ) and 126–129 (NKSD). Residue C210 is modified to Cysteine methyl ester. C210 is lipidated: S-geranylgeranyl cysteine. Residues 211-213 (KMI) constitute a propeptide, removed in mature form.

Belongs to the small GTPase superfamily. Ras family.

It is found in the cell membrane. The enzyme catalyses GTP + H2O = GDP + phosphate + H(+). Ras proteins bind GDP/GTP and possess intrinsic GTPase activity. The protein is Ras-like protein rasU (rasU) of Dictyostelium discoideum (Social amoeba).